Consider the following 177-residue polypeptide: Large ribosomal subunit protein uL6 (177 aa).

Belongs to the universal ribosomal protein uL6 family. Part of the 50S ribosomal subunit.

This protein binds to the 23S rRNA, and is important in its secondary structure. It is located near the subunit interface in the base of the L7/L12 stalk, and near the tRNA binding site of the peptidyltransferase center. The sequence is that of Large ribosomal subunit protein uL6 from Klebsiella pneumoniae subsp. pneumoniae (strain ATCC 700721 / MGH 78578).